Reading from the N-terminus, the 1663-residue chain is Cortactin-binding protein 2 (1663 aa).

Disordered regions lie at residues 1-23, 203-222, 367-440, 454-478, and 498-616; these read MATD…AGAA, KKKT…RSTE, GASV…LHPG, GNAN…SPTS, and RFTS…PKPS. Positions 119 to 276 form a coiled coil; sequence KKMQERMSAQ…EQLKRGSDSK (158 aa). Positions 386-396 are enriched in low complexity; it reads PSTGSTPDPTS. An Asymmetric dimethylarginine modification is found at arginine 498. Over residues 583–593 the composition is skewed to polar residues; that stretch reads TVASTPSSLPQ. ANK repeat units lie at residues 709-739, 743-772, 776-805, 809-838, 842-871, and 912-942; these read GRPT…DINY, DGHS…QVNA, NGFT…NINH, GGQT…NRSV, DGWT…PAHG, and EGWT…EPER. A disordered region spans residues 1449–1482; sequence KGESGAWRKVNTSPRRKSGRFSLPTWNKPDLSTE. Residue serine 1524 is modified to Phosphoserine. The interval 1581-1663 is disordered; it reads QKEVSPLSSH…KNEHLEKPNK (83 aa). Positions 1582–1599 are enriched in polar residues; sequence KEVSPLSSHQTTECSNSK. Residues 1624–1638 are compositionally biased toward low complexity; sequence SQNTKRSSSSSNTRQ. Over residues 1639 to 1648 the composition is skewed to polar residues; it reads IEINNNSKEV. A compositionally biased stretch (basic and acidic residues) spans 1653-1663; that stretch reads HKNEHLEKPNK.

As to quaternary structure, interacts with CTTN/cortactin SH3 domain. Interacts with STRN, STRN4/zinedin and MOB4/phocein; this interactions mediate the association with the STRIPAK core complex and may regulate dendritic spine distribution of the STRIPAK complex in hippocampal neurons. Activation of glutamate receptors weakens the interaction with STRN and STRN4. As to expression, highest expression in brain. Also expressed in kidney, pancreas, lung, heart, liver, skeletal muscle and placenta.

Its subcellular location is the cytoplasm. The protein localises to the cell cortex. The protein resides in the cell projection. It localises to the dendritic spine. Regulates the dendritic spine distribution of CTTN/cortactin in hippocampal neurons, and thus controls dendritic spinogenesis and dendritic spine maintenance. Associates with the striatin-interacting phosphatase and kinase (STRIPAK) core complex to regulate dendritic spine distribution of the STRIPAK complex in hippocampal neurons. The sequence is that of Cortactin-binding protein 2 from Homo sapiens (Human).